We begin with the raw amino-acid sequence, 388 residues long: Succinate--CoA ligase [ADP-forming] subunit beta (388 aa).

The region spanning 9-244 (KQLFAEYGLP…PSQEDEREAH (236 aa)) is the ATP-grasp domain. ATP is bound by residues Lys46, 53-55 (GRG), Glu99, Thr102, and Glu107. Residues Asn199 and Asp213 each contribute to the Mg(2+) site. Substrate is bound by residues Asn264 and 321-323 (GIV).

This sequence belongs to the succinate/malate CoA ligase beta subunit family. Heterotetramer of two alpha and two beta subunits. The cofactor is Mg(2+).

The enzyme catalyses succinate + ATP + CoA = succinyl-CoA + ADP + phosphate. It catalyses the reaction GTP + succinate + CoA = succinyl-CoA + GDP + phosphate. Its pathway is carbohydrate metabolism; tricarboxylic acid cycle; succinate from succinyl-CoA (ligase route): step 1/1. Its function is as follows. Succinyl-CoA synthetase functions in the citric acid cycle (TCA), coupling the hydrolysis of succinyl-CoA to the synthesis of either ATP or GTP and thus represents the only step of substrate-level phosphorylation in the TCA. The beta subunit provides nucleotide specificity of the enzyme and binds the substrate succinate, while the binding sites for coenzyme A and phosphate are found in the alpha subunit. This is Succinate--CoA ligase [ADP-forming] subunit beta from Marinomonas sp. (strain MWYL1).